A 207-amino-acid chain; its full sequence is Small ribosomal subunit protein uS4c (207 aa).

Positions Met92–Lys153 constitute an S4 RNA-binding domain.

Belongs to the universal ribosomal protein uS4 family. Part of the 30S ribosomal subunit. Contacts protein S5. The interaction surface between S4 and S5 is involved in control of translational fidelity.

It localises to the plastid. Its subcellular location is the chloroplast. One of the primary rRNA binding proteins, it binds directly to 16S rRNA where it nucleates assembly of the body of the 30S subunit. In terms of biological role, with S5 and S12 plays an important role in translational accuracy. The chain is Small ribosomal subunit protein uS4c (rps4) from Equisetum hyemale (Dutch rush).